Reading from the N-terminus, the 182-residue chain is ATP synthase subunit delta (182 aa).

The protein belongs to the ATPase delta chain family. In terms of assembly, F-type ATPases have 2 components, F(1) - the catalytic core - and F(0) - the membrane proton channel. F(1) has five subunits: alpha(3), beta(3), gamma(1), delta(1), epsilon(1). CF(0) has four main subunits: a(1), b(1), b'(1) and c(10-14). The alpha and beta chains form an alternating ring which encloses part of the gamma chain. F(1) is attached to F(0) by a central stalk formed by the gamma and epsilon chains, while a peripheral stalk is formed by the delta, b and b' chains.

Its subcellular location is the cellular thylakoid membrane. Its function is as follows. F(1)F(0) ATP synthase produces ATP from ADP in the presence of a proton or sodium gradient. F-type ATPases consist of two structural domains, F(1) containing the extramembraneous catalytic core and F(0) containing the membrane proton channel, linked together by a central stalk and a peripheral stalk. During catalysis, ATP synthesis in the catalytic domain of F(1) is coupled via a rotary mechanism of the central stalk subunits to proton translocation. This protein is part of the stalk that links CF(0) to CF(1). It either transmits conformational changes from CF(0) to CF(1) or is implicated in proton conduction. This is ATP synthase subunit delta from Synechococcus sp. (strain CC9311).